Reading from the N-terminus, the 624-residue chain is Actin-related protein 8 (624 aa).

N-acetylmethionine is present on Met-1. The span at 1-25 shows a compositional bias: basic and acidic residues; the sequence is MTQAEKGDTENGKEKGGEKEKEQRG. The segment at 1–29 is disordered; that stretch reads MTQAEKGDTENGKEKGGEKEKEQRGVKRP. Positions 55 and 56 each coordinate ATP. Ser-132 carries the phosphoserine modification. 283 to 286 contacts ATP; it reads DVGD. At Ser-412 the chain carries Phosphoserine. The interval 430–462 is disordered; the sequence is SKQEQSAKATADRKSASKPIGFEGDLRGQSSDL.

The protein belongs to the actin family. ARP8 subfamily. As to quaternary structure, component of the chromatin remodeling INO80 complex; specifically part of a complex module associated with the DBINO domain of INO80. Interacts with ACTR5; the interaction is observed in asynchronous (interphase) cells but not in metaphase-arrested cells indicative for a possible dissociation of the INO80 complex in mitotic cells. Exists as monomers and dimers, but the dimer is most probably the biologically relevant form required for stable interactions with histones that exploits the twofold symmetry of the nucleosome core.

The protein localises to the nucleus. The protein resides in the chromosome. Plays an important role in the functional organization of mitotic chromosomes. Exhibits low basal ATPase activity, and unable to polymerize. Functionally, proposed core component of the chromatin remodeling INO80 complex which is involved in transcriptional regulation, DNA replication and probably DNA repair. Required for the recruitment of INO80 (and probably the INO80 complex) to sites of DNA damage. Strongly prefer nucleosomes and H3-H4 tetramers over H2A-H2B dimers, suggesting it may act as a nucleosome recognition module within the complex. The sequence is that of Actin-related protein 8 (ACTR8) from Homo sapiens (Human).